We begin with the raw amino-acid sequence, 1433 residues long: Pleckstrin homology domain-containing family H member 1 (1433 aa).

Residues 40-174 are a coiled coil; sequence NIRHLLAERM…QILMLQDKLQ (135 aa). Disordered stretches follow at residues 247–346 and 552–634; these read DKAD…LSPP and SSVP…TSSY. Positions 252-266 are enriched in polar residues; sequence PKSSQDGVDATSTVK. Residues 279–299 show a composition bias toward basic and acidic residues; that stretch reads MRDRAMGGASDRDHSSDELNS. Positions 308–318 are enriched in low complexity; that stretch reads SSSSSSSSSSS. The span at 332 to 343 shows a compositional bias: pro residues; sequence TPTPKSPPPVSL. Acidic residues predominate over residues 557 to 567; it reads PDDDSGSEDDS. The segment covering 568-578 has biased composition (low complexity); that stretch reads SSLASLHTSTL. A compositionally biased stretch (polar residues) spans 597–606; sequence VSTSSISSES. PH domains are found at residues 643–737 and 751–859; these read TLEK…NVLK and KPTA…VAAG. Residues 896–1050 form the MyTH4 domain; it reads FSKEGLRYPL…PSRMEILSIL (155 aa). The FERM domain maps to 1061–1392; it reads FSIPVHFMNN…SYINYWTSSL (332 aa).

Functionally, critical component of the guidance pathway underlying endothelial cell migration and blood vessel patterning. Involved in mediating membrane localization of ephrin proteins, which have been shown to provide guidance cues for endothelial cell migration. The chain is Pleckstrin homology domain-containing family H member 1 (plekhh1) from Danio rerio (Zebrafish).